A 639-amino-acid polypeptide reads, in one-letter code: Transcription factor phomR (639 aa).

A DNA-binding region (zn(2)-C6 fungal-type) is located at residues C14–C41. Disordered stretches follow at residues R58–G136 and L476–E499. Low complexity predominate over residues S68–S108.

It is found in the nucleus. Its function is as follows. Transcription factor; part of the gene cluster that mediates the biosynthesis of the phomopsins, a group of hexapeptide mycotoxins which infects lupins and causes lupinosis disease in livestock. May play a role in the regulation of the production of phomopsins. This chain is Transcription factor phomR, found in Diaporthe leptostromiformis (Lupinosis disease fungus).